Reading from the N-terminus, the 581-residue chain is Arginine--tRNA ligase (581 aa).

The 'HIGH' region signature appears at 131 to 141 (ANPTGPLHVGH).

The protein belongs to the class-I aminoacyl-tRNA synthetase family. As to quaternary structure, monomer.

It localises to the cytoplasm. It catalyses the reaction tRNA(Arg) + L-arginine + ATP = L-arginyl-tRNA(Arg) + AMP + diphosphate. The protein is Arginine--tRNA ligase of Ruegeria pomeroyi (strain ATCC 700808 / DSM 15171 / DSS-3) (Silicibacter pomeroyi).